Reading from the N-terminus, the 496-residue chain is Histidine--tRNA ligase (496 aa).

The protein belongs to the class-II aminoacyl-tRNA synthetase family. Homodimer.

It localises to the cytoplasm. The catalysed reaction is tRNA(His) + L-histidine + ATP = L-histidyl-tRNA(His) + AMP + diphosphate + H(+). This chain is Histidine--tRNA ligase, found in Bartonella bacilliformis (strain ATCC 35685 / KC583 / Herrer 020/F12,63).